Reading from the N-terminus, the 118-residue chain is UPF0148 protein LS215_1455 (118 aa).

The protein belongs to the UPF0148 family.

The polypeptide is UPF0148 protein LS215_1455 (Saccharolobus islandicus (strain L.S.2.15 / Lassen #1) (Sulfolobus islandicus)).